Reading from the N-terminus, the 217-residue chain is 3,4-dihydroxy-2-butanone 4-phosphate synthase (217 aa).

Residues 37 to 38 (RE), D42, 150 to 154 (RGGHT), and E174 contribute to the D-ribulose 5-phosphate site. E38 contacts Mg(2+). H153 contributes to the Mg(2+) binding site.

The protein belongs to the DHBP synthase family. In terms of assembly, homodimer. It depends on Mg(2+) as a cofactor. Mn(2+) serves as cofactor.

It catalyses the reaction D-ribulose 5-phosphate = (2S)-2-hydroxy-3-oxobutyl phosphate + formate + H(+). Its pathway is cofactor biosynthesis; riboflavin biosynthesis; 2-hydroxy-3-oxobutyl phosphate from D-ribulose 5-phosphate: step 1/1. Functionally, catalyzes the conversion of D-ribulose 5-phosphate to formate and 3,4-dihydroxy-2-butanone 4-phosphate. The sequence is that of 3,4-dihydroxy-2-butanone 4-phosphate synthase from Enterobacter sp. (strain 638).